Consider the following 131-residue polypeptide: Small ribosomal subunit protein uS8 (131 aa).

This sequence belongs to the universal ribosomal protein uS8 family. In terms of assembly, part of the 30S ribosomal subunit. Contacts proteins S5 and S12.

In terms of biological role, one of the primary rRNA binding proteins, it binds directly to 16S rRNA central domain where it helps coordinate assembly of the platform of the 30S subunit. The sequence is that of Small ribosomal subunit protein uS8 from Burkholderia multivorans (strain ATCC 17616 / 249).